A 530-amino-acid chain; its full sequence is MKQEGSARRRGADKAKPPPGGEQEPPPPAPQDVEMKEEAAAGSGSTGEGDGKAAATEHSQRELDTVTLEDIKEHVRQLEKAVSGKEPRFVLRALRMLPSTSRRLNHYVLYKAVHGFFTSNNATRDFLLPFLEEPMDTEADLQFRPRTGKAASAPLLPEVEAYLQLLMVIFLMNSKRYKEAQKISDDLMQKISTQNRRALDLVAAKCYYYHARVYEFLDKLDVVRSFLHARLRTATLRHDADGQATLLNLLLRNYLHYSLYDQAEKLVSKSVFPEQANNNEWARYLYYTGRIKAIQLEYSEARRTMTNALRKAPQHTAVGFKQTVHKLLIVVELLLGEIPDRLQFRQPSLKRSLMPYFLLTQAVRTGNLAKFNQVLDQFGEKFQTDGTYTLIIRLRHNVIKTGVRMISLSYSRISLADIAQKLQLDSPEDAEFIVAKAIRDGVIEASINHEKGYVQSKEMIDIYSTREPQLAFHQRISFCLDIHNMSVKAMRFPPKSYNKDLESAEERREREQQDLEFAKEMAEDDDDSFP.

Residues 1–16 show a composition bias toward basic and acidic residues; the sequence is MKQEGSARRRGADKAK. A disordered region spans residues 1–65; that stretch reads MKQEGSARRR…TEHSQRELDT (65 aa). Positions 17–30 are enriched in pro residues; it reads PPPGGEQEPPPPAP. Lysine 36 is covalently cross-linked (Glycyl lysine isopeptide (Lys-Gly) (interchain with G-Cter in SUMO1); alternate). Lysine 36 participates in a covalent cross-link: Glycyl lysine isopeptide (Lys-Gly) (interchain with G-Cter in SUMO2); alternate. Residues 282–461 form the PCI domain; the sequence is ARYLYYTGRI…GYVQSKEMID (180 aa). Phosphoserine is present on residues serine 414 and serine 426. The interval 496–530 is disordered; sequence SYNKDLESAEERREREQQDLEFAKEMAEDDDDSFP. Residues 497-521 show a composition bias toward basic and acidic residues; sequence YNKDLESAEERREREQQDLEFAKEM.

The protein belongs to the proteasome subunit S3 family. In terms of assembly, component of the 19S proteasome regulatory particle complex. The 26S proteasome consists of a 20S core particle (CP) and two 19S regulatory subunits (RP). The regulatory particle is made of a lid composed of 9 subunits including PSMD3, a base containing 6 ATPases and few additional components. Interacts with UBQLN1 (via ubiquitin-like domain). Interacts with ERCC6.

Functionally, component of the 26S proteasome, a multiprotein complex involved in the ATP-dependent degradation of ubiquitinated proteins. This complex plays a key role in the maintenance of protein homeostasis by removing misfolded or damaged proteins, which could impair cellular functions, and by removing proteins whose functions are no longer required. Therefore, the proteasome participates in numerous cellular processes, including cell cycle progression, apoptosis, or DNA damage repair. This is 26S proteasome non-ATPase regulatory subunit 3 (Psmd3) from Mus musculus (Mouse).